The primary structure comprises 148 residues: Putative transmembrane protein ORF23 (148 aa).

Positions 1–18 (MVIILLGVSIVVPGLFLA) are cleaved as a signal peptide. The Extracellular portion of the chain corresponds to 19–118 (TETPQTNTFE…YVGWPSGAET (100 aa)). The chain crosses the membrane as a helical span at residues 119-139 (IITNIADIIIMATAVMIIGAI). At 140–148 (YTGYKVSIK) the chain is on the cytoplasmic side.

It localises to the host membrane. This is Putative transmembrane protein ORF23 from His1 virus (isolate Australia/Victoria) (His1V).